We begin with the raw amino-acid sequence, 76 residues long: ATP synthase subunit 9, mitochondrial (76 aa).

M1 is subject to N-formylmethionine. Helical transmembrane passes span 14-34 and 52-72; these read LASI…AALI and ILGF…AFLL.

As to quaternary structure, F-type ATP synthases have 2 components, the catalytic core F(1) and the membrane-embedded component F(0), linked together by a central stalk and a peripheral stalk. The central stalk, also called rotor shaft, is often seen as part of F(1). The peripheral stalk is seen as part of F(0). F(0) contains the membrane channel next to the rotor. F-type ATP synthases form dimers but each monomer functions independently in ATP generation. The dimer consists of 17 different polypeptides: ATP1 (subunit alpha, 3 molecules per monomer, part of F(1)), ATP2 (subunit beta, 3 copies per monomer, part of F(1)), ATP3 (subunit gamma, part of the central stalk), ATP4 (subunit b, part of the peripheral stalk), ATP5/OSCP (subunit 5/OSCP, part of the peripheral stalk), ATP6 (subunit a, part of the peripheral stalk), ATP7 (subunit d, part of the peripheral stalk), ATP8 (subunit 8, part of the peripheral stalk), OLI1 (subunit c, part of the rotor, 10 molecules per monomer), ATP14 (subunit h, part of the peripheral stalk), ATP15 (subunit epsilon, part of the central stalk), ATP16 (subunit delta, part of the central stalk), ATP17 (subunit f, part of the peripheral stalk), ATP18 (subunit i/j, part of the peripheral stalk), ATP19 (subunit k, dimer-specific, at interface between monomers), ATP20 (subunit g, at interface between monomers), TIM11 (subunit e, at interface between monomers).

It is found in the mitochondrion inner membrane. In terms of biological role, mitochondrial membrane ATP synthase (F(1)F(0) ATP synthase or Complex V) produces ATP from ADP in the presence of a proton gradient across the membrane which is generated by electron transport complexes of the respiratory chain. F-type ATP synthases consist of two structural domains, F(1) - containing the extramembraneous catalytic core, and F(0) - containing the membrane proton channel, linked together by a central stalk and a peripheral stalk. During catalysis, ATP synthesis in the catalytic domain of F(1) is coupled via a rotary mechanism of the central stalk subunits to proton translocation. Part of the complex F(0) domain. A homomeric c-ring of 10 OLI1/ATP9 subunits is part of the complex rotary element. The sequence is that of ATP synthase subunit 9, mitochondrial from Yarrowia lipolytica (strain CLIB 122 / E 150) (Yeast).